Consider the following 408-residue polypeptide: Protein trichome birefringence-like 14 (408 aa).

A helical; Signal-anchor for type II membrane protein membrane pass occupies residues 11-31 (GSVSLALIVLILLVIILLVSE). The GDS motif signature appears at 131 to 133 (GDS). The DCXHWCLPGXXDXWN motif signature appears at 387–401 (DCLHWCLPGIPDTWN).

It belongs to the PC-esterase family. TBL subfamily.

Its subcellular location is the membrane. May act as a bridging protein that binds pectin and other cell wall polysaccharides. Probably involved in maintaining esterification of pectins. May be involved in the specific O-acetylation of cell wall polymers. In Arabidopsis thaliana (Mouse-ear cress), this protein is Protein trichome birefringence-like 14 (TBL14).